Consider the following 350-residue polypeptide: Glucose-6-phosphate 3-dehydrogenase (350 aa).

Belongs to the Gfo/Idh/MocA family.

It catalyses the reaction D-glucose 6-phosphate + NAD(+) = 3-dehydro-D-glucose 6-phosphate + NADH + H(+). It participates in antibiotic biosynthesis; kanosamine biosynthesis. In terms of biological role, involved in the biosynthesis of kanosamine (3-amino-3-deoxy-D-glucose), which is known to have antibiotic and antifungal properties, and to be a precursor of the antibiotic neotrehalosadiamine (3,3'-diamino-3,3'-dideoxy-alpha,beta-trehalose (NTD)). Catalyzes the oxidation of glucose 6-phosphate to 3-oxo-D-glucose 6-phosphate. It can only use NAD. The sequence is that of Glucose-6-phosphate 3-dehydrogenase (ntdC) from Bacillus subtilis (strain 168).